Reading from the N-terminus, the 328-residue chain is 5,10-methylenetetrahydromethanopterin reductase (328 aa).

It belongs to the mer family.

It is found in the cytoplasm. It catalyses the reaction 5-methyl-5,6,7,8-tetrahydromethanopterin + oxidized coenzyme F420-(gamma-L-Glu)(n) + H(+) = 5,10-methylenetetrahydromethanopterin + reduced coenzyme F420-(gamma-L-Glu)(n). Its pathway is one-carbon metabolism; methanogenesis from CO(2); methyl-coenzyme M from 5,10-methylene-5,6,7,8-tetrahydromethanopterin: step 1/2. Functionally, catalyzes the reversible reduction of methylene-H(4)MPT to methyl-H(4)MPT. This is 5,10-methylenetetrahydromethanopterin reductase from Methanosarcina barkeri (strain Fusaro / DSM 804).